The chain runs to 579 residues: Fatty-acid amide hydrolase 1 (579 aa).

The chain crosses the membrane as a helical span at residues 9 to 29 (ALSGLSGVCLACSLLSAAVVL). Over 30-403 (RWTRSQTARG…GDFVDPCLGD (374 aa)) the chain is Cytoplasmic. Lys142 (charge relay system) is an active-site residue. Residues Met191, Ser217, and 238-241 (IGGS) each bind substrate. Ser217 functions as the Charge relay system in the catalytic mechanism. Ser241 (acyl-ester intermediate) is an active-site residue. Residue Ser241 is modified to Phosphoserine. Residues 404–433 (LVLVLKLPRWFKKLLSFLLKPLFPRLAAFL) lie within the membrane without spanning it. Residues 434-579 (NSMCPRSAEK…RLMTPEKRPS (146 aa)) lie on the Cytoplasmic side of the membrane.

This sequence belongs to the amidase family. As to quaternary structure, homodimer.

Its subcellular location is the endoplasmic reticulum membrane. The protein localises to the golgi apparatus membrane. The enzyme catalyses N-(5Z,8Z,11Z,14Z-eicosatetraenoyl)-ethanolamine + H2O = ethanolamine + (5Z,8Z,11Z,14Z)-eicosatetraenoate. It carries out the reaction (9Z)-octadecenamide + H2O = (9Z)-octadecenoate + NH4(+). The catalysed reaction is 2-(5Z,8Z,11Z,14Z-eicosatetraenoyl)-glycerol + H2O = glycerol + (5Z,8Z,11Z,14Z)-eicosatetraenoate + H(+). It catalyses the reaction N-(9Z-hexadecenoyl) ethanolamine + H2O = (9Z)-hexadecenoate + ethanolamine. The enzyme catalyses N-(9Z-octadecenoyl) ethanolamine + H2O = ethanolamine + (9Z)-octadecenoate. It carries out the reaction N-octadecanoyl ethanolamine + H2O = octadecanoate + ethanolamine. The catalysed reaction is N-docosanoyl-ethanolamine + H2O = docosanoate + ethanolamine. It catalyses the reaction N-tetracosanoyl-taurine + H2O = tetracosanoate + taurine. The enzyme catalyses N-(15Z-tetracosenoyl)-ethanolamine + H2O = (15Z)-tetracosenoate + ethanolamine. It carries out the reaction N-(9Z-octadecenoyl)-taurine + H2O = taurine + (9Z)-octadecenoate. The catalysed reaction is N-docosanoyl-taurine + H2O = docosanoate + taurine. It catalyses the reaction N-(15Z-tetracosenoyl)-taurine + H2O = (15Z)-tetracosenoate + taurine. The enzyme catalyses N-tricosanoyl-taurine + H2O = tricosanoate + taurine. It carries out the reaction (9Z,12Z,15Z)-octadecatrienamide + H2O = (9Z,12Z,15Z)-octadecatrienoate + NH4(+). The catalysed reaction is (5Z,8Z,11Z,14Z)-eicosatetraenamide + H2O = (5Z,8Z,11Z,14Z)-eicosatetraenoate + NH4(+). It catalyses the reaction (6Z)-octadecenamide + H2O = (6Z)-octadecenoate + NH4(+). The enzyme catalyses (15Z)-tetracosenamide + H2O = (15Z)-tetracosenoate + NH4(+). It carries out the reaction (8Z,11Z,14Z)-eicosatrienamide + H2O = (8Z,11Z,14Z)-eicosatrienoate + NH4(+). The catalysed reaction is (11Z,14Z,17Z)-eicosatrienamide + H2O = (11Z,14Z,17Z)-eicosatrienoate + NH4(+). It catalyses the reaction (11Z,14Z)-eicosadienamide + H2O = (11Z,14Z)-eicosadienoate + NH4(+). The enzyme catalyses (9Z,12Z)-octadecadienamide + H2O = (9Z,12Z)-octadecadienoate + NH4(+). It carries out the reaction tetradecamide + H2O = tetradecanoate + NH4(+). The catalysed reaction is 1-O-methyl-(5Z,8Z,11Z,14Z)-eicosatetraenoate + H2O = methanol + (5Z,8Z,11Z,14Z)-eicosatetraenoate + H(+). It catalyses the reaction (11Z)-eicosenamide + H2O = (11Z)-eicosenoate + NH4(+). The enzyme catalyses (9Z)-octadecenoate + glycine = N-(9Z-octadecenoyl)glycine + H2O. It carries out the reaction N-(5Z,8Z,11Z,14Z)-eicosatetraenoyl-glycine + H2O = (5Z,8Z,11Z,14Z)-eicosatetraenoate + glycine. The catalysed reaction is N-(5Z,8Z,11Z,14Z-eicosatetraenoyl)-L-serine + H2O = (5Z,8Z,11Z,14Z)-eicosatetraenoate + L-serine. With respect to regulation, inhibited the trifluoromethyl compound PF-3845. Catalyzes the hydrolysis of endogenous amidated lipids like the endocannabinoid anandamide (N-(5Z,8Z,11Z,14Z-eicosatetraenoyl)-ethanolamine), as well as other fatty amides such as the taurine-conjugated fatty acids (a structural class of central nervous system (CNS) metabolites), to their corresponding fatty acids, thereby regulating the signaling functions of these molecules. FAAH cooperates with PM20D1 in the hydrolysis of amino acid-conjugated fatty acids such as N-fatty acyl glycine and N-fatty acyl-L-serine, thereby acting as a physiological regulator of specific subsets of intracellular, but not of extracellular, N-fatty acyl amino acids. It can also catalyze the hydrolysis of the endocannabinoid 2-arachidonoylglycerol (2-(5Z,8Z,11Z,14Z-eicosatetraenoyl)-glycerol). This chain is Fatty-acid amide hydrolase 1 (Faah), found in Mus musculus (Mouse).